Here is a 645-residue protein sequence, read N- to C-terminus: ATP-dependent zinc metalloprotease FtsH 3 (645 aa).

Topologically, residues 1-11 (MQNKRNQSRVL) are cytoplasmic. The chain crosses the membrane as a helical span at residues 12 to 32 (WLLLIYITIGIFIYVGVNSLI). At 33–110 (GTPDVSKIEY…YVRSLENSWW (78 aa)) the chain is on the periplasmic side. Residues 111-131 (ISILTFLLPVFLLIFLFTFLF) traverse the membrane as a helical segment. At 132–645 (RSSGGGANQG…ENNLIERKGI (514 aa)) the chain is on the cytoplasmic side. Residue 202–209 (GEPGTGKT) participates in ATP binding. H424 provides a ligand contact to Zn(2+). E425 is a catalytic residue. Zn(2+) is bound by residues H428 and D501.

In the central section; belongs to the AAA ATPase family. The protein in the C-terminal section; belongs to the peptidase M41 family. Homohexamer. It depends on Zn(2+) as a cofactor.

The protein resides in the cell inner membrane. Acts as a processive, ATP-dependent zinc metallopeptidase for both cytoplasmic and membrane proteins. Plays a role in the quality control of integral membrane proteins. The sequence is that of ATP-dependent zinc metalloprotease FtsH 3 from Petrotoga mobilis (strain DSM 10674 / SJ95).